The chain runs to 283 residues: Protein FAM170B (283 aa).

The segment covering 1–11 (MKCYFTDHRGE) has biased composition (basic and acidic residues). Disordered stretches follow at residues 1–58 (MKCY…REEG) and 246–283 (AQGQAHDQQLEEEQSPSDNSECSRPQGEVLSAQQQEKQ).

Belongs to the FAM170 family. Interacts with GOPC. In terms of tissue distribution, exclusively expressed in adult testis.

It localises to the cytoplasmic vesicle. The protein resides in the secretory vesicle. The protein localises to the acrosome. It is found in the acrosome outer membrane. Plays a role in fertilization through the acrosome reaction. The protein is Protein FAM170B of Homo sapiens (Human).